The chain runs to 313 residues: Pyrimidine-specific ribonucleoside hydrolase RihB (313 aa).

Residue D11 is the Proton acceptor of the active site. The Ca(2+) site is built by D11, D16, and V124. Positions 227 and 239 each coordinate substrate. D240 contacts Ca(2+).

The protein belongs to the IUNH family. RihB subfamily. Homotetramer. It depends on Ca(2+) as a cofactor.

The enzyme catalyses a pyrimidine ribonucleoside + H2O = a pyrimidine nucleobase + D-ribose. In terms of biological role, hydrolyzes cytidine or uridine to ribose and cytosine or uracil, respectively. Has a clear preference for cytidine over uridine. Strictly specific for ribonucleosides. The chain is Pyrimidine-specific ribonucleoside hydrolase RihB from Escherichia coli (strain K12 / DH10B).